The chain runs to 874 residues: Probable leucine--tRNA ligase, cytoplasmic (874 aa).

A 'HIGH' region motif is present at residues 36-46; sequence PYMNGRLHLGH. A 'KMSKS' region motif is present at residues 544–548; the sequence is KMSKS. Lysine 547 is a binding site for ATP.

It belongs to the class-I aminoacyl-tRNA synthetase family.

It localises to the cytoplasm. The enzyme catalyses tRNA(Leu) + L-leucine + ATP = L-leucyl-tRNA(Leu) + AMP + diphosphate. The chain is Probable leucine--tRNA ligase, cytoplasmic from Encephalitozoon cuniculi (strain GB-M1) (Microsporidian parasite).